The primary structure comprises 285 residues: Polyamine aminopropyltransferase (285 aa).

One can recognise a PABS domain in the interval 5 to 238 (EMWYETLHTG…GIMTFAWASD (234 aa)). Position 33 (glutamine 33) interacts with S-methyl-5'-thioadenosine. Spermidine contacts are provided by histidine 64 and aspartate 88. Residues glutamate 108 and 140-141 (DG) contribute to the S-methyl-5'-thioadenosine site. Aspartate 158 functions as the Proton acceptor in the catalytic mechanism. 158–161 (DCTD) serves as a coordination point for spermidine. Residue proline 165 participates in S-methyl-5'-thioadenosine binding.

This sequence belongs to the spermidine/spermine synthase family. In terms of assembly, homodimer or homotetramer.

It is found in the cytoplasm. The catalysed reaction is S-adenosyl 3-(methylsulfanyl)propylamine + putrescine = S-methyl-5'-thioadenosine + spermidine + H(+). The protein operates within amine and polyamine biosynthesis; spermidine biosynthesis; spermidine from putrescine: step 1/1. In terms of biological role, catalyzes the irreversible transfer of a propylamine group from the amino donor S-adenosylmethioninamine (decarboxy-AdoMet) to putrescine (1,4-diaminobutane) to yield spermidine. This Erwinia tasmaniensis (strain DSM 17950 / CFBP 7177 / CIP 109463 / NCPPB 4357 / Et1/99) protein is Polyamine aminopropyltransferase.